A 357-amino-acid polypeptide reads, in one-letter code: Holliday junction branch migration complex subunit RuvB (357 aa).

Residues 1 to 10 (MAIQSDSLSS) show a composition bias toward polar residues. The segment at 1-30 (MAIQSDSLSSRPDAPRLVAPAPASPNEESI) is disordered. The interval 5-195 (SDSLSSRPDA…FGIVSRLEFY (191 aa)) is large ATPase domain (RuvB-L). ATP contacts are provided by residues L34, R35, G76, K79, T80, T81, 142–144 (EDF), R185, Y195, and R232. T80 is a binding site for Mg(2+). The tract at residues 196–266 (NTDDLAHIVT…AANQALAMLE (71 aa)) is small ATPAse domain (RuvB-S). The segment at 269–357 (PQGLDLMDRK…QPSSGDLFGA (89 aa)) is head domain (RuvB-H). R305, R324, and R329 together coordinate DNA.

Belongs to the RuvB family. As to quaternary structure, homohexamer. Forms an RuvA(8)-RuvB(12)-Holliday junction (HJ) complex. HJ DNA is sandwiched between 2 RuvA tetramers; dsDNA enters through RuvA and exits via RuvB. An RuvB hexamer assembles on each DNA strand where it exits the tetramer. Each RuvB hexamer is contacted by two RuvA subunits (via domain III) on 2 adjacent RuvB subunits; this complex drives branch migration. In the full resolvosome a probable DNA-RuvA(4)-RuvB(12)-RuvC(2) complex forms which resolves the HJ.

It localises to the cytoplasm. The enzyme catalyses ATP + H2O = ADP + phosphate + H(+). Functionally, the RuvA-RuvB-RuvC complex processes Holliday junction (HJ) DNA during genetic recombination and DNA repair, while the RuvA-RuvB complex plays an important role in the rescue of blocked DNA replication forks via replication fork reversal (RFR). RuvA specifically binds to HJ cruciform DNA, conferring on it an open structure. The RuvB hexamer acts as an ATP-dependent pump, pulling dsDNA into and through the RuvAB complex. RuvB forms 2 homohexamers on either side of HJ DNA bound by 1 or 2 RuvA tetramers; 4 subunits per hexamer contact DNA at a time. Coordinated motions by a converter formed by DNA-disengaged RuvB subunits stimulates ATP hydrolysis and nucleotide exchange. Immobilization of the converter enables RuvB to convert the ATP-contained energy into a lever motion, pulling 2 nucleotides of DNA out of the RuvA tetramer per ATP hydrolyzed, thus driving DNA branch migration. The RuvB motors rotate together with the DNA substrate, which together with the progressing nucleotide cycle form the mechanistic basis for DNA recombination by continuous HJ branch migration. Branch migration allows RuvC to scan DNA until it finds its consensus sequence, where it cleaves and resolves cruciform DNA. In Bordetella avium (strain 197N), this protein is Holliday junction branch migration complex subunit RuvB.